A 207-amino-acid polypeptide reads, in one-letter code: Superoxide dismutase [Mn] (207 aa).

Positions 28, 76, 160, and 164 each coordinate Mn(2+).

This sequence belongs to the iron/manganese superoxide dismutase family. Mn(2+) serves as cofactor.

The enzyme catalyses 2 superoxide + 2 H(+) = H2O2 + O2. Destroys superoxide anion radicals which are normally produced within the cells and which are toxic to biological systems. The protein is Superoxide dismutase [Mn] (sodA) of Mycobacterium lepraemurium.